The following is a 338-amino-acid chain: Eukaryotic translation initiation factor 3 subunit H (338 aa).

An MPN domain is found at 22 to 154 (VQCDGLAVMK…LKAYRLTPQA (133 aa)).

It belongs to the eIF-3 subunit H family. As to quaternary structure, component of the eukaryotic translation initiation factor 3 (eIF-3) complex. The eIF-3 complex interacts with pix. Interacts with mxt.

It is found in the cytoplasm. Its function is as follows. Component of the eukaryotic translation initiation factor 3 (eIF-3) complex, which is involved in protein synthesis of a specialized repertoire of mRNAs and, together with other initiation factors, stimulates binding of mRNA and methionyl-tRNAi to the 40S ribosome. The eIF-3 complex specifically targets and initiates translation of a subset of mRNAs involved in cell proliferation. This is Eukaryotic translation initiation factor 3 subunit H from Drosophila sechellia (Fruit fly).